Consider the following 506-residue polypeptide: Galactose/methyl galactoside import ATP-binding protein MglA (506 aa).

ABC transporter domains follow at residues 14–249 and 264–506; these read LEMS…VGRS and VILE…SLHL. 46-53 serves as a coordination point for ATP; that stretch reads GENGAGKS.

The protein belongs to the ABC transporter superfamily. Galactose/methyl galactoside importer (TC 3.A.1.2.3) family. As to quaternary structure, the complex is composed of one ATP-binding protein (MglA), two transmembrane proteins (MglC) and a solute-binding protein (MglB).

It localises to the cell inner membrane. It carries out the reaction D-galactose(out) + ATP + H2O = D-galactose(in) + ADP + phosphate + H(+). The enzyme catalyses methyl beta-D-galactoside(out) + ATP + H2O = methyl beta-D-galactoside(in) + ADP + phosphate + H(+). Functionally, part of the ABC transporter complex MglABC involved in galactose/methyl galactoside import. Responsible for energy coupling to the transport system. This Escherichia coli (strain K12) protein is Galactose/methyl galactoside import ATP-binding protein MglA.